The primary structure comprises 480 residues: Glutamate--tRNA ligase (480 aa).

The 'HIGH' region motif lies at 9–19; it reads PSPTGDPHVGT. Residues 253 to 257 carry the 'KMSKS' region motif; the sequence is KISKR. Residue lysine 256 participates in ATP binding.

Belongs to the class-I aminoacyl-tRNA synthetase family. Glutamate--tRNA ligase type 1 subfamily. Monomer.

The protein localises to the cytoplasm. It catalyses the reaction tRNA(Glu) + L-glutamate + ATP = L-glutamyl-tRNA(Glu) + AMP + diphosphate. Catalyzes the attachment of glutamate to tRNA(Glu) in a two-step reaction: glutamate is first activated by ATP to form Glu-AMP and then transferred to the acceptor end of tRNA(Glu). The sequence is that of Glutamate--tRNA ligase from Deinococcus geothermalis (strain DSM 11300 / CIP 105573 / AG-3a).